The sequence spans 124 residues: Protein ApaG (124 aa).

An ApaG domain is found at 1–124; that stretch reads MSRYELTVQV…FALAMPRMLH (124 aa).

The protein is Protein ApaG of Ralstonia nicotianae (strain ATCC BAA-1114 / GMI1000) (Ralstonia solanacearum).